The primary structure comprises 387 residues: G-protein coupled receptor homolog R33 (387 aa).

Residues M1–R33 are Extracellular-facing. An N-linked (GlcNAc...) asparagine; by host glycan is attached at N20. Residues D34 to S61 form a helical membrane-spanning segment. Topologically, residues N62 to T71 are cytoplasmic. A helical transmembrane segment spans residues L72–S94. Over N95–K107 the chain is Extracellular. A helical transmembrane segment spans residues I108–I129. Topologically, residues N130–Y150 are cytoplasmic. Residues A151–L169 form a helical membrane-spanning segment. Residues Y170–K204 lie on the Extracellular side of the membrane. A helical membrane pass occupies residues I205–V224. The Cytoplasmic portion of the chain corresponds to F225 to F244. The helical transmembrane segment at V245 to Y268 threads the bilayer. At G269–A285 the chain is on the extracellular side. Residues V286–G309 traverse the membrane as a helical segment. The Cytoplasmic segment spans residues R310–C387. The disordered stretch occupies residues R368 to C387. Pro residues predominate over residues R374–C387.

It belongs to the G-protein coupled receptor 1 family.

The protein localises to the host cell membrane. Plays an important role in vivo, in particular in the dissemination to or replication in the salivary gland. The protein is G-protein coupled receptor homolog R33 of Rattus.